A 542-amino-acid chain; its full sequence is Cytochrome P450 monooxygenase TRI1 (542 aa).

Residues 37–54 (LIYFLCFVVLGRAVQWFL) traverse the membrane as a helical segment. N-linked (GlcNAc...) asparagine glycosylation is found at asparagine 167, asparagine 297, and asparagine 428. Position 469 (cysteine 469) interacts with heme.

It belongs to the cytochrome P450 family. It depends on heme as a cofactor.

Its subcellular location is the membrane. It functions in the pathway sesquiterpene biosynthesis; trichothecene biosynthesis. Cytochrome P450 monooxygenase; part of 2-gene cluster involved in trichothecene C-8 modification that mediates the biosynthesis of T2-toxin. The biosynthesis of trichothecenes begins with the cyclization of farnesyl diphosphate to trichodiene and is catalyzed by the trichodiene synthase TRI5. Trichodiene undergoes a series of oxygenations catalyzed by the cytochrome P450 monooxygenase TRI4. TRI4 controls the addition of four oxygens at C-2, C-3, C-11, and the C-12, C-13-epoxide to form the intermediate isotrichotriol. Isotrichotriol then undergoes a non-enzymatic isomerization and cyclization to form isotrichodermol. During this process, the oxygen at the C-2 position becomes the pyran ring oxygen and the hydroxyl group at C-11 is lost. More complex type A trichothecenes are built by modifying isotrichodermol through a series of paired hydroxylation and acetylation or acylation steps. Isotrichodermol is converted to isotrichodermin by the acetyltransferase TRI101. TRI101 encodes a C-3 transacetylase that acts as a self-protection or resistance factor during biosynthesis and that the presence of a free C-3 hydroxyl group is a key component of Fusarium trichothecene phytotoxicity. A second hydroxyl group is added to C-15 by the trichothecene C-15 hydroxylase TRI11, producing 15-decalonectrin, which is then acetylated by TRI3, producing calonectrin. A third hydroxyl group is added at C-4 by the cytochrome P450 monooxygenase TRI13, converting calonectrin to 3,15-diacetoxyspirpenol, which is subsequently acetylated by the acetyltransferase TRI7. A fourth hydroxyl group is added to C-8 by the cytochrome P450 monooxygenase TRI1, followed by the addition of an isovaleryl moiety by TRI16. Finally, the acetyl group is removed from the C-3 position by the trichothecene C-3 esterase TRI8 to produce T-2 toxin. The polypeptide is Cytochrome P450 monooxygenase TRI1 (Fusarium sporotrichioides).